Here is a 557-residue protein sequence, read N- to C-terminus: Potassium-transporting ATPase potassium-binding subunit (557 aa).

10 helical membrane-spanning segments follow: residues 4–24 (LGAGLLQAGLLLLLLAAVHVP), 61–81 (TYALSVLGFSTVSILFLYAFL), 131–151 (GLTVQNFLSAAVGLAVAVALV), 174–194 (LRVLLPLAFAGAVLLLLTGVV), 253–273 (LEVFLILVIPFSLPRAFGTLV), 280–300 (LAVLSVMGTIFGASLALTTWA), 375–395 (GLYGMLVLAVITVFVAGLMVG), 412–432 (CAALYVLVTPAVLLTGTAVAL), 483–503 (LAIWLGRFLPMVLVLALAGAF), and 528–548 (LAVVVVVSALTFFPALALGPI).

Belongs to the KdpA family. In terms of assembly, the system is composed of three essential subunits: KdpA, KdpB and KdpC.

It is found in the cell membrane. Functionally, part of the high-affinity ATP-driven potassium transport (or Kdp) system, which catalyzes the hydrolysis of ATP coupled with the electrogenic transport of potassium into the cytoplasm. This subunit binds the extracellular potassium ions and delivers the ions to the membrane domain of KdpB through an intramembrane tunnel. This Kineococcus radiotolerans (strain ATCC BAA-149 / DSM 14245 / SRS30216) protein is Potassium-transporting ATPase potassium-binding subunit.